The sequence spans 216 residues: Uracil phosphoribosyltransferase (216 aa).

5-phospho-alpha-D-ribose 1-diphosphate-binding positions include Arg85, Arg110, and 135 to 143; that span reads DPMVATGYS. Uracil-binding positions include Ile200 and 205 to 207; that span reads GDA. A 5-phospho-alpha-D-ribose 1-diphosphate-binding site is contributed by Asp206.

Belongs to the UPRTase family. The cofactor is Mg(2+).

It catalyses the reaction UMP + diphosphate = 5-phospho-alpha-D-ribose 1-diphosphate + uracil. It functions in the pathway pyrimidine metabolism; UMP biosynthesis via salvage pathway; UMP from uracil: step 1/1. Its activity is regulated as follows. Allosterically activated by GTP. Catalyzes the conversion of uracil and 5-phospho-alpha-D-ribose 1-diphosphate (PRPP) to UMP and diphosphate. This chain is Uracil phosphoribosyltransferase, found in Burkholderia vietnamiensis (strain G4 / LMG 22486) (Burkholderia cepacia (strain R1808)).